We begin with the raw amino-acid sequence, 319 residues long: Carboxylesterase NlhH (319 aa).

An Involved in the stabilization of the negatively charged intermediate by the formation of the oxyanion hole motif is present at residues 88-90; the sequence is HGG. Residues Ser162, Asp260, and His290 contribute to the active site.

It belongs to the 'GDXG' lipolytic enzyme family. Monomer.

The enzyme catalyses a carboxylic ester + H2O = an alcohol + a carboxylate + H(+). Its function is as follows. Hydrolyzes various short-chain esters. The polypeptide is Carboxylesterase NlhH (nlhH) (Mycobacterium tuberculosis (strain CDC 1551 / Oshkosh)).